The following is a 289-amino-acid chain: 4-diphosphocytidyl-2-C-methyl-D-erythritol kinase (289 aa).

Residue lysine 11 is part of the active site. 93-103 (PLAAGLAGGSA) contacts ATP. Aspartate 135 is a catalytic residue.

This sequence belongs to the GHMP kinase family. IspE subfamily.

The enzyme catalyses 4-CDP-2-C-methyl-D-erythritol + ATP = 4-CDP-2-C-methyl-D-erythritol 2-phosphate + ADP + H(+). It participates in isoprenoid biosynthesis; isopentenyl diphosphate biosynthesis via DXP pathway; isopentenyl diphosphate from 1-deoxy-D-xylulose 5-phosphate: step 3/6. Its function is as follows. Catalyzes the phosphorylation of the position 2 hydroxy group of 4-diphosphocytidyl-2C-methyl-D-erythritol. In Thermoanaerobacter sp. (strain X514), this protein is 4-diphosphocytidyl-2-C-methyl-D-erythritol kinase.